A 117-amino-acid chain; its full sequence is Non-specific lipid-transfer protein (117 aa).

Positions 1–26 (MASSAFVKFTCALVMCMMVAAPLAEA) are cleaved as a signal peptide. 4 cysteine pairs are disulfide-bonded: Cys29/Cys76, Cys39/Cys53, Cys54/Cys99, and Cys74/Cys113.

Belongs to the plant LTP family.

Functionally, plant non-specific lipid-transfer proteins transfer phospholipids as well as galactolipids across membranes. May play a role in wax or cutin deposition in the cell walls of expanding epidermal cells and certain secretory tissues. Also has fungicide activity. The chain is Non-specific lipid-transfer protein (IWF1') from Beta vulgaris (Sugar beet).